An 86-amino-acid polypeptide reads, in one-letter code: Probable weak neurotoxin NNAM1 (86 aa).

A signal peptide spans 1-21 (MKTLLLSLVVVTIVCLDLGYT). Intrachain disulfides connect Cys-24/Cys-45, Cys-27/Cys-32, Cys-38/Cys-63, Cys-67/Cys-78, and Cys-79/Cys-84.

The protein belongs to the three-finger toxin family. Ancestral subfamily. Orphan group II sub-subfamily. In terms of tissue distribution, expressed by the venom gland.

It localises to the secreted. In terms of biological role, binds with low affinity to muscular (alpha-1-beta-1-delta-epsilon/CHRNA1-CHRNB1-CHRND-CHRNE) and very low affinity to neuronal (alpha-7/CHRNA7) nicotinic acetylcholine receptor (nAChR). This Naja atra (Chinese cobra) protein is Probable weak neurotoxin NNAM1.